Consider the following 521-residue polypeptide: MALRAPTLLLLLLGLLLLPLLPGLPPRATGCPAACRCYSATVECGALRLRVVPPGIPPGTQTLFLQDNSIAHLEQGSLAPLAALRHLYLHNNTLRALESGAFRAQPRLLELALTGNRLRGLRGGAFVGLVQLRVLYLAGNQLAKLLDFTFLHLPRLQELHLQENSIELLEDQALAGLSSLALLDLSRNQLGTISKEALQPLSSLQVLRLTENPWRCDCALHWLGSWIKEGGRRLLSSRDKKITCAEPPRLALQSLLEVSGGSLICIPPSVNVEPPEFTANLGEDLQVACQASGYPQPLVVWRKVPQPRDGKPQAQAQLEGGAPGLGGHGTRDTGSGMLFLTNITLAHAGKYECEAANAGGKARVPFHLLVNASRQQSQQLPDPQAPATRPVGHEPQHEAGSMAFRALGLATQTAITAAIALLALTALLLAAMICRRRRRRKKVPAPSGEGTLFVNDYSDGPCTFAQLEELRDDHGHEMFVIDRSKPLFPEVLPEEAPEHNPPDGLKSGLRLPTRVAYEIHC.

Residues 1-23 form the signal peptide; sequence MALRAPTLLLLLLGLLLLPLLPG. The 35-residue stretch at 24–58 folds into the LRRNT domain; the sequence is LPPRATGCPAACRCYSATVECGALRLRVVPPGIPP. LRR repeat units follow at residues 59 to 80, 83 to 104, 107 to 128, 131 to 152, 155 to 176, and 179 to 200; these read GTQT…SLAP, ALRH…AFRA, RLLE…AFVG, QLRV…TFLH, RLQE…ALAG, and SLAL…ALQP. Asn-91 is a glycosylation site (N-linked (GlcNAc...) asparagine). In terms of domain architecture, LRRCT spans 212-267; that stretch reads NPWRCDCALHWLGSWIKEGGRRLLSSRDKKITCAEPPRLALQSLLEVSGGSLICIP. Positions 268–371 constitute an Ig-like C2-type domain; the sequence is PSVNVEPPEF…ARVPFHLLVN (104 aa). Cys-289 and Cys-353 form a disulfide bridge. Residues 306-330 are disordered; it reads QPRDGKPQAQAQLEGGAPGLGGHGT. Residues Asn-342 and Asn-371 are each glycosylated (N-linked (GlcNAc...) asparagine). The segment at 374–395 is disordered; that stretch reads RQQSQQLPDPQAPATRPVGHEP. Residues 414–434 traverse the membrane as a helical segment; that stretch reads AITAAIALLALTALLLAAMIC.

It localises to the membrane. The chain is Leucine-rich repeat-containing protein 24 (Lrrc24) from Mus musculus (Mouse).